Consider the following 169-residue polypeptide: Photosystem I assembly protein Ycf3 (169 aa).

3 TPR repeats span residues 35–68 (AFTY…EIDP), 72–105 (SYIL…NPSL), and 120–153 (GEQA…APNN).

It belongs to the Ycf3 family.

The protein resides in the plastid. It is found in the chloroplast thylakoid membrane. Its function is as follows. Essential for the assembly of the photosystem I (PSI) complex. May act as a chaperone-like factor to guide the assembly of the PSI subunits. This is Photosystem I assembly protein Ycf3 from Staurastrum punctulatum (Green alga).